A 323-amino-acid chain; its full sequence is Secreted frizzled-related protein 3 (323 aa).

An N-terminal signal peptide occupies residues 1–32; sequence MVCCGPGRMLLGWAGLLVLAALCLLQVPGAQA. Positions 33-150 constitute an FZ domain; that stretch reads AACEPVRIPL…VYDRGVCISP (118 aa). 5 disulfide bridges follow: C35–C96, C43–C89, C80–C119, C108–C147, and C112–C136. An N-linked (GlcNAc...) asparagine glycan is attached at N49. The 121-residue stretch at 178-298 folds into the NTR domain; that stretch reads CKCKPVRATQ…WDMKLRHLGL (121 aa). Residues 299 to 323 form a disordered region; that stretch reads GKTDASDSTQNQKSGRNSNPRPARS. A compositionally biased stretch (polar residues) spans 304–323; the sequence is SDSTQNQKSGRNSNPRPARS.

It belongs to the secreted frizzled-related protein (sFRP) family. As to quaternary structure, interacts with MYOC. As to expression, expressed in kidney, brain, testis. Weak expression in spleen and heart.

Its subcellular location is the secreted. Its function is as follows. Soluble frizzled-related proteins (sFRPS) function as modulators of Wnt signaling through direct interaction with Wnts. They have a role in regulating cell growth and differentiation in specific cell types. SFRP3/FRZB appears to be involved in limb skeletogenesis. Antagonist of Wnt8 signaling. Regulates chondrocyte maturation and long bone development. This chain is Secreted frizzled-related protein 3 (Frzb), found in Mus musculus (Mouse).